The chain runs to 526 residues: Arp2/3 complex-activating protein rickA (526 aa).

The disordered stretch occupies residues 305 to 356; it reads TTSSIAKPLENNVTPPPPLTKNNIPPPPPPPPLSKNNILPPPPPPMPTMAPA. The segment covering 318 to 352 has biased composition (pro residues); sequence TPPPPLTKNNIPPPPPPPPLSKNNILPPPPPPMPT. 2 consecutive WH2 domains span residues 383-400 and 410-427; these read DTSD…LRKV and SRDL…LRKV. Disordered stretches follow at residues 425–452 and 464–526; these read RKVE…SKPN and MEMS…FVRS. The central and acidic domains stretch occupies residues 448–484; sequence VSKPNGVASILARRVAMEMSDSSSSSGSESDSGNWSD. Positions 464-480 are enriched in low complexity; it reads MEMSDSSSSSGSESDSG. Polar residues-rich tracts occupy residues 481 to 491 and 506 to 526; these read NWSDASVNSNK and TTHA…FVRS.

Homodimer.

It is found in the cell surface. Its function is as follows. Recruits and activates the Arp2/3 complex, which in turn leads to actin polymerization, promoting Rickettsia motility during infection. This chain is Arp2/3 complex-activating protein rickA (rickA), found in Rickettsia felis (strain ATCC VR-1525 / URRWXCal2) (Rickettsia azadi).